We begin with the raw amino-acid sequence, 378 residues long: Putative aminoglycoside phosphotransferase (378 aa).

ATP contacts are provided by residues arginine 79 and 134-136 (DYV). The active-site Proton acceptor is aspartate 249. Mg(2+)-binding residues include asparagine 254, aspartate 267, and glutamate 269.

The protein belongs to the aminoglycoside phosphotransferase family.

In terms of biological role, might catalyze the phosphorylation of aminoglycosides and confer aminoglycoside antibiotics resistance. The polypeptide is Putative aminoglycoside phosphotransferase (Mycobacterium tuberculosis (strain CDC 1551 / Oshkosh)).